Consider the following 370-residue polypeptide: Probable dual-specificity RNA methyltransferase RlmN (370 aa).

Residue E91 is the Proton acceptor of the active site. The region spanning 97–329 (QHYGLSVCVT…KKNGVNCVVR (233 aa)) is the Radical SAM core domain. A disulfide bond links C104 and C340. Positions 111, 115, and 118 each coordinate [4Fe-4S] cluster. Residues 163–164 (GE), S195, 218–220 (SLH), and N296 contribute to the S-adenosyl-L-methionine site. C340 serves as the catalytic S-methylcysteine intermediate.

This sequence belongs to the radical SAM superfamily. RlmN family. [4Fe-4S] cluster serves as cofactor.

It localises to the cytoplasm. The enzyme catalyses adenosine(2503) in 23S rRNA + 2 reduced [2Fe-2S]-[ferredoxin] + 2 S-adenosyl-L-methionine = 2-methyladenosine(2503) in 23S rRNA + 5'-deoxyadenosine + L-methionine + 2 oxidized [2Fe-2S]-[ferredoxin] + S-adenosyl-L-homocysteine. The catalysed reaction is adenosine(37) in tRNA + 2 reduced [2Fe-2S]-[ferredoxin] + 2 S-adenosyl-L-methionine = 2-methyladenosine(37) in tRNA + 5'-deoxyadenosine + L-methionine + 2 oxidized [2Fe-2S]-[ferredoxin] + S-adenosyl-L-homocysteine. Its function is as follows. Specifically methylates position 2 of adenine 2503 in 23S rRNA and position 2 of adenine 37 in tRNAs. This Streptococcus suis (strain 98HAH33) protein is Probable dual-specificity RNA methyltransferase RlmN.